Here is a 629-residue protein sequence, read N- to C-terminus: tRNA uridine 5-carboxymethylaminomethyl modification enzyme MnmG (629 aa).

FAD-binding positions include 13–18 (GGGHAG), Val-125, and Ser-180. 273–287 (GPRYCPSIEDKVMRF) serves as a coordination point for NAD(+). FAD is bound at residue Gln-370.

It belongs to the MnmG family. In terms of assembly, homodimer. Heterotetramer of two MnmE and two MnmG subunits. It depends on FAD as a cofactor.

Its subcellular location is the cytoplasm. In terms of biological role, NAD-binding protein involved in the addition of a carboxymethylaminomethyl (cmnm) group at the wobble position (U34) of certain tRNAs, forming tRNA-cmnm(5)s(2)U34. The protein is tRNA uridine 5-carboxymethylaminomethyl modification enzyme MnmG of Escherichia coli O157:H7.